The sequence spans 164 residues: Small ribosomal subunit protein uS5 (164 aa).

In terms of domain architecture, S5 DRBM spans 10-73 (LEERVVAINR…EAAKKNMIEV (64 aa)).

This sequence belongs to the universal ribosomal protein uS5 family. In terms of assembly, part of the 30S ribosomal subunit. Contacts proteins S4 and S8.

Its function is as follows. With S4 and S12 plays an important role in translational accuracy. Located at the back of the 30S subunit body where it stabilizes the conformation of the head with respect to the body. The chain is Small ribosomal subunit protein uS5 from Streptococcus pyogenes serotype M1.